The chain runs to 431 residues: Keratin, type I cytoskeletal 40 (431 aa).

A head region spans residues 1 to 89 (MTSDCSSTHC…CEDGVFTSNE (89 aa)). Positions 89-400 (EKETMQFLND…GLLDSEDSRL (312 aa)) constitute an IF rod domain. The coil 1A stretch occupies residues 90-124 (KETMQFLNDRLASYLEKVRSLEETNAELESRIQEQ). Positions 125 to 135 (CEQDIPMVCPD) are linker 1. Residues 136-236 (YQRYFNTIED…HEEEVNLLRE (101 aa)) are coil 1B. A linker 12 region spans residues 237-252 (QLGDRLSVELDTAPTL). Residues 253–396 (DLNRVLDEMR…NTYWGLLDSE (144 aa)) form a coil 2 region. Residues 397 to 431 (DSRLSCSPCSTTCTSSNTCEPCSAYVICTVENCCL) are tail.

Belongs to the intermediate filament family. In terms of assembly, heterotetramer of two type I and two type II keratins. As to expression, expressed in skin and scalp. Also very weakly expressed in tongue, breast, colon and small intestine. In the hair follicle, it is specifically present in the upper hair cuticle. Not present in the upper cortex (at protein level).

Its function is as follows. May play a role in late hair differentiation. This Homo sapiens (Human) protein is Keratin, type I cytoskeletal 40 (KRT40).